The following is a 185-amino-acid chain: Peptidyl-tRNA hydrolase (185 aa).

Tyrosine 14 serves as a coordination point for tRNA. Residue histidine 19 is the Proton acceptor of the active site. TRNA is bound by residues phenylalanine 64, asparagine 66, and asparagine 112.

The protein belongs to the PTH family. Monomer.

It localises to the cytoplasm. The enzyme catalyses an N-acyl-L-alpha-aminoacyl-tRNA + H2O = an N-acyl-L-amino acid + a tRNA + H(+). In terms of biological role, hydrolyzes ribosome-free peptidyl-tRNAs (with 1 or more amino acids incorporated), which drop off the ribosome during protein synthesis, or as a result of ribosome stalling. Catalyzes the release of premature peptidyl moieties from peptidyl-tRNA molecules trapped in stalled 50S ribosomal subunits, and thus maintains levels of free tRNAs and 50S ribosomes. The polypeptide is Peptidyl-tRNA hydrolase (Halalkalibacterium halodurans (strain ATCC BAA-125 / DSM 18197 / FERM 7344 / JCM 9153 / C-125) (Bacillus halodurans)).